We begin with the raw amino-acid sequence, 325 residues long: MLERVLLLTLILSFVITVILSPIFIPFLRRLKFGQSIREEGPKSHQKKSGTPTMGGLMILLSILVSSLFVSFQLSIFSMDVLLLLLVTIGFGVLGFIDDFIKVVMKRNLGLTSKQKLIGQLVVAVLFYLGLRNMGLSTEVTIPATSLSIDFGWFYLPLVIVMLVGASNAVNLTDGLDGLVAGTGAIAFGAFAIIAWATNYFEVAIFSAAVVGAVLGFLVFNSHPAKVFMGDTGSLALGGAIAAIAIMAKQEILLIIIGGVFVIETLSVIIQVISFKTRGKRIFKMSPLHHHYELSGWSEWRVVVTFWTVGLLFAMLAIYLEVWIT.

The next 10 membrane-spanning stretches (helical) occupy residues 5–25 (VLLL…PIFI), 57–77 (LMIL…LSIF), 81–101 (VLLL…DDFI), 117–137 (LIGQ…MGLS), 146–166 (SLSI…LVGA), 178–198 (GLVA…AWAT), 200–220 (YFEV…FLVF), 227–247 (VFMG…IAIM), 252–272 (ILLI…IIQV), and 304–324 (VTFW…EVWI).

Belongs to the glycosyltransferase 4 family. MraY subfamily. Requires Mg(2+) as cofactor.

It localises to the cell membrane. It carries out the reaction UDP-N-acetyl-alpha-D-muramoyl-L-alanyl-gamma-D-glutamyl-meso-2,6-diaminopimeloyl-D-alanyl-D-alanine + di-trans,octa-cis-undecaprenyl phosphate = di-trans,octa-cis-undecaprenyl diphospho-N-acetyl-alpha-D-muramoyl-L-alanyl-D-glutamyl-meso-2,6-diaminopimeloyl-D-alanyl-D-alanine + UMP. Its pathway is cell wall biogenesis; peptidoglycan biosynthesis. Catalyzes the initial step of the lipid cycle reactions in the biosynthesis of the cell wall peptidoglycan: transfers peptidoglycan precursor phospho-MurNAc-pentapeptide from UDP-MurNAc-pentapeptide onto the lipid carrier undecaprenyl phosphate, yielding undecaprenyl-pyrophosphoryl-MurNAc-pentapeptide, known as lipid I. The polypeptide is Phospho-N-acetylmuramoyl-pentapeptide-transferase (Halalkalibacterium halodurans (strain ATCC BAA-125 / DSM 18197 / FERM 7344 / JCM 9153 / C-125) (Bacillus halodurans)).